A 256-amino-acid polypeptide reads, in one-letter code: Thiazole synthase (256 aa).

Residue K95 is the Schiff-base intermediate with DXP of the active site. 1-deoxy-D-xylulose 5-phosphate contacts are provided by residues G156, 182-183 (AG), and 204-205 (NT).

The protein belongs to the ThiG family. In terms of assembly, homotetramer. Forms heterodimers with either ThiH or ThiS.

It is found in the cytoplasm. The enzyme catalyses [ThiS sulfur-carrier protein]-C-terminal-Gly-aminoethanethioate + 2-iminoacetate + 1-deoxy-D-xylulose 5-phosphate = [ThiS sulfur-carrier protein]-C-terminal Gly-Gly + 2-[(2R,5Z)-2-carboxy-4-methylthiazol-5(2H)-ylidene]ethyl phosphate + 2 H2O + H(+). It participates in cofactor biosynthesis; thiamine diphosphate biosynthesis. In terms of biological role, catalyzes the rearrangement of 1-deoxy-D-xylulose 5-phosphate (DXP) to produce the thiazole phosphate moiety of thiamine. Sulfur is provided by the thiocarboxylate moiety of the carrier protein ThiS. In vitro, sulfur can be provided by H(2)S. The polypeptide is Thiazole synthase (Salmonella paratyphi A (strain ATCC 9150 / SARB42)).